A 473-amino-acid chain; its full sequence is Fumarate hydratase class II 2 (473 aa).

The segment at 1 to 28 is disordered; it reads MAKSARTKTARPATRTETDSFGPIEVPS. Residues 108–110, 139–142, 149–151, and threonine 197 contribute to the substrate site; these read SGT, HPND, and SSN. The active-site Proton donor/acceptor is the histidine 198. Residue serine 328 is part of the active site. Substrate contacts are provided by residues serine 329 and 334–336; that span reads KVN.

It belongs to the class-II fumarase/aspartase family. Fumarase subfamily. Homotetramer.

Its subcellular location is the cytoplasm. It carries out the reaction (S)-malate = fumarate + H2O. It functions in the pathway carbohydrate metabolism; tricarboxylic acid cycle; (S)-malate from fumarate: step 1/1. Involved in the TCA cycle. Catalyzes the stereospecific interconversion of fumarate to L-malate. The sequence is that of Fumarate hydratase class II 2 from Bradyrhizobium diazoefficiens (strain JCM 10833 / BCRC 13528 / IAM 13628 / NBRC 14792 / USDA 110).